We begin with the raw amino-acid sequence, 557 residues long: Small ribosomal subunit protein bS1 (557 aa).

S1 motif domains are found at residues 21 to 87 (GSIV…LSRE), 105 to 171 (AETV…VSRR), 192 to 260 (GMEV…LGLK), and 277 to 347 (GTKL…LGLK). N6-acetyllysine occurs at positions 229, 279, and 363. 2 consecutive S1 motif domains span residues 364 to 434 (GDRV…LGVK) and 451 to 520 (GAIV…LSVR).

Belongs to the bacterial ribosomal protein bS1 family. Part of the 30S ribosomal subunit. Some nascent polypeptide chains are able to cross-link to this protein in situ. Can be cross-linked to mRNA in the ribosome. In terms of processing, phosphorylated; probably on a serine.

Required for translation of most natural mRNAs except for leaderless mRNA. Binds mRNA upstream of the Shine-Dalgarno (SD) sequence and helps it bind to the 30S ribosomal subunit; acts as an RNA chaperone to unfold structured mRNA on the ribosome but is not essential for mRNAs with strong SDs and little 5'-UTR structure, thus it may help fine-tune which mRNAs that are translated. Unwinds dsRNA by binding to transiently formed ssRNA regions; binds about 10 nucleotides. Has a preference for polypyrimidine tracts. Negatively autoregulates its own translation. This Escherichia coli O157:H7 protein is Small ribosomal subunit protein bS1 (rpsA).